Reading from the N-terminus, the 237-residue chain is Flagellar brake protein YcgR (237 aa).

Residues 108 to 225 enclose the PilZ domain; that stretch reads QRRRQFRVTT…MERKIQSAVF (118 aa).

Belongs to the YcgR family. Monomer. Interacts with the flagellar basal bodies.

Its subcellular location is the bacterial flagellum basal body. Functionally, acts as a flagellar brake, regulating swimming and swarming in a bis-(3'-5') cyclic diguanylic acid (c-di-GMP)-dependent manner. Binds 1 c-di-GMP dimer per subunit. Increasing levels of c-di-GMP lead to decreased motility. The chain is Flagellar brake protein YcgR from Serratia proteamaculans (strain 568).